The chain runs to 315 residues: 4-hydroxy-3-methylbut-2-enyl diphosphate reductase (315 aa).

[4Fe-4S] cluster is bound at residue C18. (2E)-4-hydroxy-3-methylbut-2-enyl diphosphate is bound by residues H47 and H80. H47 and H80 together coordinate dimethylallyl diphosphate. Isopentenyl diphosphate is bound by residues H47 and H80. C102 is a binding site for [4Fe-4S] cluster. H130 serves as a coordination point for (2E)-4-hydroxy-3-methylbut-2-enyl diphosphate. H130 provides a ligand contact to dimethylallyl diphosphate. H130 contacts isopentenyl diphosphate. The Proton donor role is filled by E132. Position 171 (T171) interacts with (2E)-4-hydroxy-3-methylbut-2-enyl diphosphate. C201 contributes to the [4Fe-4S] cluster binding site. Residues S229, S230, N231, and S274 each contribute to the (2E)-4-hydroxy-3-methylbut-2-enyl diphosphate site. S229, S230, N231, and S274 together coordinate dimethylallyl diphosphate. Positions 229, 230, 231, and 274 each coordinate isopentenyl diphosphate.

Belongs to the IspH family. It depends on [4Fe-4S] cluster as a cofactor.

The catalysed reaction is isopentenyl diphosphate + 2 oxidized [2Fe-2S]-[ferredoxin] + H2O = (2E)-4-hydroxy-3-methylbut-2-enyl diphosphate + 2 reduced [2Fe-2S]-[ferredoxin] + 2 H(+). It carries out the reaction dimethylallyl diphosphate + 2 oxidized [2Fe-2S]-[ferredoxin] + H2O = (2E)-4-hydroxy-3-methylbut-2-enyl diphosphate + 2 reduced [2Fe-2S]-[ferredoxin] + 2 H(+). It functions in the pathway isoprenoid biosynthesis; dimethylallyl diphosphate biosynthesis; dimethylallyl diphosphate from (2E)-4-hydroxy-3-methylbutenyl diphosphate: step 1/1. The protein operates within isoprenoid biosynthesis; isopentenyl diphosphate biosynthesis via DXP pathway; isopentenyl diphosphate from 1-deoxy-D-xylulose 5-phosphate: step 6/6. Its function is as follows. Catalyzes the conversion of 1-hydroxy-2-methyl-2-(E)-butenyl 4-diphosphate (HMBPP) into a mixture of isopentenyl diphosphate (IPP) and dimethylallyl diphosphate (DMAPP). Acts in the terminal step of the DOXP/MEP pathway for isoprenoid precursor biosynthesis. This Hyphomonas neptunium (strain ATCC 15444) protein is 4-hydroxy-3-methylbut-2-enyl diphosphate reductase.